A 280-amino-acid polypeptide reads, in one-letter code: 4-diphosphocytidyl-2-C-methyl-D-erythritol kinase (280 aa).

Residue Lys-8 is part of the active site. 91 to 101 (PVSAGLAGGST) is a binding site for ATP. Asp-133 is a catalytic residue.

This sequence belongs to the GHMP kinase family. IspE subfamily.

It carries out the reaction 4-CDP-2-C-methyl-D-erythritol + ATP = 4-CDP-2-C-methyl-D-erythritol 2-phosphate + ADP + H(+). The protein operates within isoprenoid biosynthesis; isopentenyl diphosphate biosynthesis via DXP pathway; isopentenyl diphosphate from 1-deoxy-D-xylulose 5-phosphate: step 3/6. Functionally, catalyzes the phosphorylation of the position 2 hydroxy group of 4-diphosphocytidyl-2C-methyl-D-erythritol. In Clostridium beijerinckii (strain ATCC 51743 / NCIMB 8052) (Clostridium acetobutylicum), this protein is 4-diphosphocytidyl-2-C-methyl-D-erythritol kinase.